We begin with the raw amino-acid sequence, 311 residues long: 33 kDa chaperonin (311 aa).

Disulfide bonds link C240/C242 and C273/C276.

It belongs to the HSP33 family. In terms of processing, under oxidizing conditions two disulfide bonds are formed involving the reactive cysteines. Under reducing conditions zinc is bound to the reactive cysteines and the protein is inactive.

The protein resides in the cytoplasm. Its function is as follows. Redox regulated molecular chaperone. Protects both thermally unfolding and oxidatively damaged proteins from irreversible aggregation. Plays an important role in the bacterial defense system toward oxidative stress. The chain is 33 kDa chaperonin from Trichodesmium erythraeum (strain IMS101).